The chain runs to 45 residues: Large ribosomal subunit protein bL36 (45 aa).

Belongs to the bacterial ribosomal protein bL36 family.

The polypeptide is Large ribosomal subunit protein bL36 (Psychrobacter sp. (strain PRwf-1)).